A 222-amino-acid polypeptide reads, in one-letter code: Cytidylate kinase 2 (222 aa).

Gly-7–Thr-15 is a binding site for ATP.

This sequence belongs to the cytidylate kinase family. Type 1 subfamily.

The protein localises to the cytoplasm. It carries out the reaction CMP + ATP = CDP + ADP. It catalyses the reaction dCMP + ATP = dCDP + ADP. This is Cytidylate kinase 2 from Haemophilus influenzae (strain ATCC 51907 / DSM 11121 / KW20 / Rd).